Consider the following 434-residue polypeptide: Chaperone SurA (434 aa).

A signal peptide spans 1–22 (MKHSKKIIFALLALAMSNTSMA). PpiC domains lie at 173 to 274 (DVEF…KVVD) and 283 to 383 (VEEV…QLES).

The protein localises to the periplasm. It catalyses the reaction [protein]-peptidylproline (omega=180) = [protein]-peptidylproline (omega=0). Chaperone involved in the correct folding and assembly of outer membrane proteins. Recognizes specific patterns of aromatic residues and the orientation of their side chains, which are found more frequently in integral outer membrane proteins. May act in both early periplasmic and late outer membrane-associated steps of protein maturation. This chain is Chaperone SurA, found in Shewanella frigidimarina (strain NCIMB 400).